The sequence spans 62 residues: Large ribosomal subunit protein eL37 (62 aa).

Zn(2+) is bound by residues C20, C23, C35, and C38. The segment at 20-38 (CRRCGRRSYHVRKKACSAC) adopts a C4-type zinc-finger fold.

Belongs to the eukaryotic ribosomal protein eL37 family. Zn(2+) serves as cofactor.

Its function is as follows. Binds to the 23S rRNA. The sequence is that of Large ribosomal subunit protein eL37 from Methanococcus aeolicus (strain ATCC BAA-1280 / DSM 17508 / OCM 812 / Nankai-3).